The following is a 553-amino-acid chain: Glutamate--tRNA ligase (553 aa).

A 'HIGH' region motif is present at residues P103–H113.

It belongs to the class-I aminoacyl-tRNA synthetase family. Glutamate--tRNA ligase type 2 subfamily.

Its subcellular location is the cytoplasm. The enzyme catalyses tRNA(Glu) + L-glutamate + ATP = L-glutamyl-tRNA(Glu) + AMP + diphosphate. In terms of biological role, catalyzes the attachment of glutamate to tRNA(Glu) in a two-step reaction: glutamate is first activated by ATP to form Glu-AMP and then transferred to the acceptor end of tRNA(Glu). This Methanothermobacter thermautotrophicus (strain ATCC 29096 / DSM 1053 / JCM 10044 / NBRC 100330 / Delta H) (Methanobacterium thermoautotrophicum) protein is Glutamate--tRNA ligase.